The primary structure comprises 453 residues: UDP-glycosyltransferase 74E2 (453 aa).

H17 functions as the Proton acceptor in the catalytic mechanism. H17 is a binding site for an anthocyanidin. D109 (charge relay) is an active-site residue. Residues T131, Q334, H349, W352, N353, S354, E357, D373, and Q374 each contribute to the UDP-alpha-D-glucose site.

It belongs to the UDP-glycosyltransferase family. In terms of tissue distribution, expressed in roots, cotyledons and leaf hydathodes.

It catalyses the reaction (indol-3-yl)butanoate + UDP-alpha-D-glucose = 4-(indol-3-yl)butanoyl-beta-D-glucose + UDP. In terms of biological role, glucosyltransferase that acts on the auxin indole-3-butyric acid (IBA). Mediates abiotic stress responses and stress-induced morphological adaptations by regulating auxin homeostasis. Possesses low activity in vitro on jasmonate (JA) and the synthetic auxin analog naphthaleneacetic acid (NAA). The sequence is that of UDP-glycosyltransferase 74E2 (UGT74E2) from Arabidopsis thaliana (Mouse-ear cress).